We begin with the raw amino-acid sequence, 536 residues long: Probable cytochrome P450 318a1 (536 aa).

The segment covering 439–457 has biased composition (basic and acidic residues); that stretch reads EEEQLSKGHNDSGSGEKRR. A disordered region spans residues 439-460; it reads EEEQLSKGHNDSGSGEKRRQRD. C477 lines the heme pocket.

It belongs to the cytochrome P450 family. Heme is required as a cofactor.

It localises to the endoplasmic reticulum membrane. It is found in the microsome membrane. Functionally, may be involved in the metabolism of insect hormones and in the breakdown of synthetic insecticides. This chain is Probable cytochrome P450 318a1 (Cyp318a1), found in Drosophila melanogaster (Fruit fly).